Consider the following 81-residue polypeptide: Photosystem I iron-sulfur center (81 aa).

2 4Fe-4S ferredoxin-type domains span residues 2–31 and 37–68; these read SHAVKIYDTCIGCTQCVRACPLDVLEMVPW and GQIASSPRTEDCVGCKRCETACPTDFLSIRVY. Positions 11, 14, 17, 21, 48, 51, 54, and 58 each coordinate [4Fe-4S] cluster.

In terms of assembly, the cyanobacterial PSI reaction center is composed of one copy each of PsaA,B,C,D,E,F,I,J,K,L,M and X, and forms trimeric complexes. [4Fe-4S] cluster serves as cofactor.

The protein localises to the cellular thylakoid membrane. The enzyme catalyses reduced [plastocyanin] + hnu + oxidized [2Fe-2S]-[ferredoxin] = oxidized [plastocyanin] + reduced [2Fe-2S]-[ferredoxin]. In terms of biological role, apoprotein for the two 4Fe-4S centers FA and FB of photosystem I (PSI); essential for photochemical activity. FB is the terminal electron acceptor of PSI, donating electrons to ferredoxin. The C-terminus interacts with PsaA/B/D and helps assemble the protein into the PSI complex. Required for binding of PsaD and PsaE to PSI. PSI is a plastocyanin/cytochrome c6-ferredoxin oxidoreductase, converting photonic excitation into a charge separation, which transfers an electron from the donor P700 chlorophyll pair to the spectroscopically characterized acceptors A0, A1, FX, FA and FB in turn. The chain is Photosystem I iron-sulfur center from Synechococcus sp. (strain WH8103).